The sequence spans 211 residues: Urease accessory protein UreG (211 aa).

11-18 (GPVGSGKT) provides a ligand contact to GTP.

Belongs to the SIMIBI class G3E GTPase family. UreG subfamily. As to quaternary structure, homodimer. UreD, UreF and UreG form a complex that acts as a GTP-hydrolysis-dependent molecular chaperone, activating the urease apoprotein by helping to assemble the nickel containing metallocenter of UreC. The UreE protein probably delivers the nickel.

It localises to the cytoplasm. Facilitates the functional incorporation of the urease nickel metallocenter. This process requires GTP hydrolysis, probably effectuated by UreG. In Laribacter hongkongensis (strain HLHK9), this protein is Urease accessory protein UreG.